The following is a 382-amino-acid chain: Mannan endo-1,4-beta-mannosidase (382 aa).

The N-terminal stretch at 1–19 (MVKLFSFLLLVWVASPAFS) is a signal peptide. Substrate contacts are provided by residues W83, N144, 147-151 (WDESK), and N180. E181 functions as the Proton donor/acceptor in the catalytic mechanism. Q187, Q204, W208, W243, Y282, and H284 together coordinate substrate. C195 and C262 are oxidised to a cystine. Residue E312 is the Nucleophile of the active site. A disulfide bond links C317 and C349. Substrate is bound by residues W341 and D348. The tract at residues 346 to 350 (GGDCS) is involved in stabilization of the transition state.

The protein belongs to the glycosyl hydrolase 5 (cellulase A) family. As to quaternary structure, monomer.

Its subcellular location is the secreted. The enzyme catalyses Random hydrolysis of (1-&gt;4)-beta-D-mannosidic linkages in mannans, galactomannans and glucomannans.. Its activity is regulated as follows. Activated particularly by Ca(2+) and Zn(2+), and to a lesser extent by Na(+), K(+), Mg(2+) and Cu(2+). Activation effect of the divalent metal ions Ca(2+), Zn(2+), Mg(2+) and Cu(2+) is reduced significantly by the addition of EDTA. Strongly inhibited by Mn(2+), Hg(2+) and Ag(+). Functionally, hydrolyzes 1,4-beta linked polysaccharide backbones of mannans. Has high activity toward locust bean gum. Also active toward konjac and beta-1,4-mannan. Hydrolyzes mannotetraose (M4) and mannopentaose (M5) to mannobiose (M2) and mannotriose (M3) with a little production of mannose (M1). Hydrolyzes beta-1,4-mannan to M2, M3 and M4. Hardly hydrolyzes M2 and M3. Does not hydrolyze p-nitrophenyl-beta-D-mannopyranoside, gua-gum, carboxymethyl cellulose, soluble starch or laminarin. In Cryptopygus antarcticus (Antarctic springtail), this protein is Mannan endo-1,4-beta-mannosidase.